The chain runs to 61 residues: Ferredoxin-2 (61 aa).

4Fe-4S ferredoxin-type domains are found at residues 2–27 (HRIT…SAGD) and 28–61 (EIYI…IIKV). [4Fe-4S] cluster-binding residues include cysteine 8, cysteine 11, cysteine 14, cysteine 18, cysteine 37, cysteine 40, cysteine 49, and cysteine 53.

It depends on [4Fe-4S] cluster as a cofactor.

Its function is as follows. Ferredoxins are iron-sulfur proteins that transfer electrons in a wide variety of metabolic reactions. The chain is Ferredoxin-2 from Chlorobium limicola.